We begin with the raw amino-acid sequence, 261 residues long: Putative hydro-lyase SAR11_0660 (261 aa).

It belongs to the D-glutamate cyclase family.

This is Putative hydro-lyase SAR11_0660 from Pelagibacter ubique (strain HTCC1062).